The primary structure comprises 137 residues: Fibroblast growth factor 2 (137 aa).

N27 contacts heparin. Y73 bears the Phosphotyrosine; by TEC mark. K86 is covalently cross-linked (Glycyl lysine isopeptide (Lys-Gly) (interchain with G-Cter in SUMO1)). Residues K119 to K135 form a heparin-binding region.

Belongs to the heparin-binding growth factors family. As to quaternary structure, monomer. Homodimer. Interacts with FGFR1, FGFR2, FGFR3 and FGFR4. Affinity between fibroblast growth factors (FGFs) and their receptors is increased by heparan sulfate glycosaminoglycans that function as coreceptors. Interacts with CSPG4, FGFBP1 and TEC. Found in a complex with FGFBP1, FGF1 and FGF2. Interacts with FGFBP3. Interacts with integrin ITGAV:ITGB3; the interaction is required for FGF2 signaling. Interacts with SNORC (via the extracellular domain). Interacts with glypican GPC3. Phosphorylation at Tyr-73 regulates FGF2 unconventional secretion.

The protein resides in the secreted. The protein localises to the nucleus. Functionally, acts as a ligand for FGFR1, FGFR2, FGFR3 and FGFR4. Also acts as an integrin ligand which is required for FGF2 signaling. Binds to integrin ITGAV:ITGB3. Plays an important role in the regulation of cell survival, cell division, cell differentiation and cell migration. Functions as a potent mitogen in vitro. Can induce angiogenesis. Mediates phosphorylation of ERK1/2 and thereby promotes retinal lens fiber differentiation. The chain is Fibroblast growth factor 2 (FGF2) from Oryctolagus cuniculus (Rabbit).